The chain runs to 1053 residues: Prestalk protein (1053 aa).

A signal peptide spans 1 to 18; it reads MNKIYLILILFTFVGIIL. The stretch at 38–60 is one X-1 repeat; that stretch reads NKCTLDKCNNGCCSNTPININDN. The segment at 38–1019 is 41 X 24 AA tandem repeats, Cys-rich; that stretch reads NKCTLDKCNN…VHTPVDCNDN (982 aa). One copy of the X-2 repeat lies at 61–84; it reads DECTVDTCNPKTGISHTPVNCDDG. The X-3 repeat unit spans residues 85–108; sequence NSCTADSCLCGKGCQHVPIACDDN. The stretch at 109 to 132 is one A-1 repeat; the sequence is NACTVDSCSNSTGCCHTPLSCDDN. An A-2 repeat occupies 133 to 156; the sequence is NPCTVDSCSNSTGCCHTPINVDDH. One copy of the B-1 repeat lies at 157–180; it reads NACTEDKCTQSGGVTHTPIACDDK. The stretch at 181 to 204 is one A-3 repeat; it reads NACTVDSCSNSTGCCHTPLSCDDN. The A-4 repeat unit spans residues 205–228; that stretch reads NACTVDSCSNSTGCVHTPINVDDH. Residues 229-252 form a B-2 repeat; sequence NACTEDKCTQSGGVTHTPIACDDK. One copy of the A-5 repeat lies at 253–276; sequence NACTADSCSNSTGCCHTPITCDDN. The A-6 repeat unit spans residues 277–300; it reads NACTVDSCSNSTGCCHTPINVDDN. The stretch at 301 to 324 is one B-3 repeat; sequence NACTEDKCTQSGGVTHTPIACDDK. Residues 325 to 348 form an A-7 repeat; it reads NACTVDSCSNSTGCVHTPLACDDK. Residues 349 to 372 form an A-8 repeat; that stretch reads NPCTVDSCSNSTGCCHTPINVDDN. Residues 373-396 form a B-4 repeat; it reads NACTEDKCTQSGGVTHTPINCDDN. The A-9 repeat unit spans residues 397–420; the sequence is NKCTVDSCSNSTGCCHTPMSCDDN. An A-10 repeat occupies 421 to 444; that stretch reads NPCTVDSCSNSTGCVHTPINVDDN. Residues 445–468 form a B-5 repeat; sequence NACTEDKCTQNGGVTHTPIACDDK. The A-11 repeat unit spans residues 469 to 492; the sequence is NACTVDSCSNSTGCCHTPLKCDDN. One copy of the A-12 repeat lies at 493-516; it reads NACTVDSCSNSTGCVHTPINVDDN. The B-6 repeat unit spans residues 517–540; the sequence is NACTEDKCTQSGGVTHTPISCDDK. The A-13 repeat unit spans residues 541 to 564; sequence NPCTIDSCSNSTGCVHTPMSCDDR. The stretch at 565–588 is one X-4 repeat; it reads NPCTSDFCSWEKGCQHVALSCNDF. Residues 589 to 612 form an A-14 repeat; sequence NACTMDSCSNSTGCTHTPIACDDK. The A-15 repeat unit spans residues 613-636; the sequence is NACTVDSCSNSTGCVHTPLTCDDN. Residues 637 to 660 form an A-16 repeat; that stretch reads NPCTVDSCSNSTGCCHTPINVDDH. The stretch at 661–684 is one B-7 repeat; sequence NACTEDKCTQSGGVTHTPIACDDK. One copy of the A-17 repeat lies at 685–708; sequence NACTVDSCSNSTGCCHTPLSCDDN. The stretch at 709 to 732 is one A-18 repeat; sequence NACTVDSCSNSTGCVHTPINVDDN. A B-8 repeat occupies 733–756; sequence NACTEDKCTQNGGVTHTPIACDDK. Residues 757–780 form an A-19 repeat; the sequence is NACTVDSCSNSTGCCHTPLKCDDN. An A-20 repeat occupies 781-804; the sequence is NPCTVDSCSNSTGCVHTPMNVDDN. A B-9 repeat occupies 805 to 828; the sequence is NACTEDKCTQNGGVTHTPIRCDDL. The stretch at 829 to 852 is one A-21 repeat; that stretch reads NSCTADSCSNSTGCVHTPINCDDN. Residues 853–876 form an A-22 repeat; that stretch reads NKCTADSCSNSTGCCHTPISCDDN. One copy of the A-23 repeat lies at 877–900; sequence NPCTVDSCSNSTGCCHTPINVDDN. The B-10 repeat unit spans residues 901 to 924; the sequence is NPCTEDKCTQSGGVTHTPIGCNDN. One copy of the A-24 repeat lies at 925 to 948; that stretch reads NACTVDSCSNSTGCTHTPMKCDDN. One copy of the A-25 repeat lies at 949–971; the sequence is NPCTIDSCSNSTGCVHTPMNCDD. One copy of the A-26 repeat lies at 972-995; it reads GNFCTLDSCCSTGCTHTPIIIDDN. The A-27 repeat unit spans residues 996–1019; it reads NPCTVDSCCNSTGVVHTPVDCNDN.

It is found in the secreted. Its subcellular location is the extracellular space. It localises to the extracellular matrix. Its function is as follows. Component of the stalk tube, the matrix that encases stalk cells. The chain is Prestalk protein (ecmB) from Dictyostelium discoideum (Social amoeba).